We begin with the raw amino-acid sequence, 36 residues long: Potassium channel toxin alpha-KTx 11.3 (36 aa).

Intrachain disulfides connect cysteine 8–cysteine 27, cysteine 13–cysteine 33, and cysteine 17–cysteine 35.

The protein belongs to the short scorpion toxin superfamily. Potassium channel inhibitor family. Alpha-KTx 11 subfamily. Expressed by the venom gland.

It is found in the secreted. Functionally, binds and inhibits voltage-sensitive potassium channels. Inhibits the vertebrate potassium channel Kv1.1/KCNA1 with low affinity. This is Potassium channel toxin alpha-KTx 11.3 from Parabuthus granulatus (Granulated thick-tailed scorpion).